The chain runs to 432 residues: DEAD-box ATP-dependent RNA helicase 56 (432 aa).

Residues 1 to 28 (MAEAEVKDNEVYEEDLVDYEEEVENGTD) adopt a coiled-coil conformation. Positions 51-79 (SGFRDFLLKPELLRAIQDCGFEHPSEVQH) match the Q motif motif. One can recognise a Helicase ATP-binding domain in the interval 82 to 255 (IPQAILGMDV…KKFMQDPMEI (174 aa)). 95-102 (AKSGMGKT) serves as a coordination point for ATP. The DEAD box signature appears at 202–205 (DECD). The Helicase C-terminal domain maps to 283–428 (KLNDLLDALD…ELPEQIDTST (146 aa)).

It belongs to the DEAD box helicase family. DECD subfamily. As to quaternary structure, homodimer and heterodimer with AIP2. Interacts with API5.

Its subcellular location is the nucleus. The enzyme catalyses ATP + H2O = ADP + phosphate + H(+). ATP-binding RNA helicase involved in pre-mRNA splicing. Required for the export of mRNA out of the nucleus. Required for tapetal programmed cell death (PCD) and degeneration during anther development. Forms dimer with AIP2 and binds the promoter region of the cysteine protease CP1. Can complement the yeast RNA helicase SUB2. Plants silencing AIP1 and AIP2 are male sterile. The chain is DEAD-box ATP-dependent RNA helicase 56 from Oryza sativa subsp. japonica (Rice).